A 142-amino-acid chain; its full sequence is Hemoglobin subunit alpha-B (142 aa).

The region spanning 2–142 is the Globin domain; sequence VLSPTDKSNV…VSTVLTSKYR (141 aa). His-59 contributes to the O2 binding site. His-88 lines the heme b pocket.

This sequence belongs to the globin family. Heterotetramer of two alpha chains and two beta chains. In terms of tissue distribution, red blood cells.

Its function is as follows. Involved in oxygen transport from the lung to the various peripheral tissues. The protein is Hemoglobin subunit alpha-B (HBAB) of Otolemur crassicaudatus (Brown greater galago).